The following is a 110-amino-acid chain: UPF0145 protein LMOf2365_0219 (110 aa).

It belongs to the UPF0145 family.

This is UPF0145 protein LMOf2365_0219 from Listeria monocytogenes serotype 4b (strain F2365).